The chain runs to 500 residues: Monocarboxylate transporter 1 (500 aa).

The Cytoplasmic portion of the chain corresponds to 1–22; the sequence is MPPAVGGPVGYTPPDGGWGWAV. Residues 23-44 traverse the membrane as a helical segment; the sequence is VIGAFISIGFSYAFPKSITVFF. Residue K38 coordinates (S)-lactate. Residues 45-55 lie on the Extracellular side of the membrane; that stretch reads KEIEGIFHATT. Residues 56 to 80 traverse the membrane as a helical segment; it reads SEVSWISSIMLAVMYGGGPISSILV. Over 81 to 84 the chain is Cytoplasmic; the sequence is NKYG. Residues 85-105 traverse the membrane as a helical segment; it reads SRIVMIVGGCLSGCGLIAASF. At 106–109 the chain is on the extracellular side; it reads CNTV. A helical transmembrane segment spans residues 110–132; sequence QQLYVCIGVIGGLGLAFNLNPAL. The Cytoplasmic segment spans residues 133–146; sequence TMIGKYFYKRRPLA. Residues 147 to 169 form a helical membrane-spanning segment; that stretch reads NGLAMAGSPVFLCTLAPLNQVFF. The Extracellular segment spans residues 170–174; it reads GIFGW. A helical membrane pass occupies residues 175-194; it reads RGSFLILGGLLLNCCVAGAL. At 195-261 the chain is on the cytoplasmic side; it reads MRPIGPKPTK…FLDLTLFTHR (67 aa). Phosphoserine occurs at positions 210 and 213. T231 bears the Phosphothreonine mark. A helical transmembrane segment spans residues 262 to 288; it reads GFLLYLSGNVIMFFGLFAPLVFLSSYG. Over 289 to 295 the chain is Extracellular; sequence KSQHYSS. A helical membrane pass occupies residues 296–317; it reads EKSAFLLSILAFVDMVARPSMG. Residue D309 coordinates H(+). (S)-lactate is bound at residue R313. Residues 318–328 are Cytoplasmic-facing; that stretch reads LVANTKPIRPR. Residues 329–349 traverse the membrane as a helical segment; the sequence is IQYFFAASVVANGVCHMLAPL. Residues 350 to 353 lie on the Extracellular side of the membrane; sequence STTY. The helical transmembrane segment at 354-375 threads the bilayer; sequence VGFCVYAGFFGFAFGWLSSVLF. Residues 376–389 are Cytoplasmic-facing; that stretch reads ETLMDLVGPQRFSS. Residues 390–410 form a helical membrane-spanning segment; sequence AVGLVTIVECCPVLLGPPLLG. Topologically, residues 411 to 421 are extracellular; sequence RLNDMYGDYKY. The chain crosses the membrane as a helical span at residues 422 to 443; it reads TYWACGVVLIISGIYLFIGMGI. At 444 to 500 the chain is on the cytoplasmic side; sequence NYRLLAKEQKANEQKKESKEEETSIDVAGKPNEVTKAAESPDQKDTDGGPKEEESPV. A compositionally biased stretch (basic and acidic residues) spans 454-465; sequence ANEQKKESKEEE. The tract at residues 454-500 is disordered; the sequence is ANEQKKESKEEETSIDVAGKPNEVTKAAESPDQKDTDGGPKEEESPV. At S461 the chain carries Phosphoserine. Residue T466 is modified to Phosphothreonine. Phosphoserine is present on residues S467, S483, and S498. A compositionally biased stretch (basic and acidic residues) spans 482 to 500; it reads ESPDQKDTDGGPKEEESPV.

Belongs to the major facilitator superfamily. Monocarboxylate porter (TC 2.A.1.13) family. As to quaternary structure, interacts with EMB; interaction mediates SLC16A1 targeting to the plasma membrane. Interacts with isoform 2 of BSG; interaction mediates SLC16A1 targeting to the plasma membrane. Widely expressed. Detected in heart and in blood lymphocytes and monocytes (at protein level).

It is found in the cell membrane. The protein localises to the basolateral cell membrane. Its subcellular location is the apical cell membrane. It catalyses the reaction (S)-lactate(in) + H(+)(in) = (S)-lactate(out) + H(+)(out). It carries out the reaction acetate(out) + H(+)(out) = acetate(in) + H(+)(in). The enzyme catalyses acetoacetate(out) + H(+)(out) = acetoacetate(in) + H(+)(in). The catalysed reaction is pyruvate(out) + H(+)(out) = pyruvate(in) + H(+)(in). It catalyses the reaction (R)-3-hydroxybutanoate(out) + H(+)(out) = (R)-3-hydroxybutanoate(in) + H(+)(in). It carries out the reaction 3-methyl-2-oxobutanoate(out) + H(+)(out) = 3-methyl-2-oxobutanoate(in) + H(+)(in). The enzyme catalyses 4-methyl-2-oxopentanoate(out) + H(+)(out) = 4-methyl-2-oxopentanoate(in) + H(+)(in). The catalysed reaction is succinate(in) + 2 H(+)(in) = succinate(out) + 2 H(+)(out). Its activity is regulated as follows. Selectively inhibited by AZD3965, that acts as a competitive inhibitor binding to the central channel in the outward open conformation. In terms of biological role, bidirectional proton-coupled monocarboxylate transporter. Catalyzes the rapid transport across the plasma membrane of many monocarboxylates such as lactate, pyruvate, acetate and the ketone bodies acetoacetate and beta-hydroxybutyrate, and thus contributes to the maintenance of intracellular pH. The transport direction is determined by the proton motive force and the concentration gradient of the substrate monocarboxylate. MCT1 is a major lactate exporter. Plays a role in cellular responses to a high-fat diet by modulating the cellular levels of lactate and pyruvate that contribute to the regulation of central metabolic pathways and insulin secretion, with concomitant effects on plasma insulin levels and blood glucose homeostasis. Facilitates the protonated monocarboxylate form of succinate export, that its transient protonation upon muscle cell acidification in exercising muscle and ischemic heart. Functions via alternate outward- and inward-open conformation states. Protonation and deprotonation of 309-Asp is essential for the conformational transition. The sequence is that of Monocarboxylate transporter 1 from Homo sapiens (Human).